We begin with the raw amino-acid sequence, 133 residues long: UPF0292 protein TGAM_1777 (133 aa).

One can recognise a Toprim domain in the interval 20–100 (EGALIVEGLR…RVDVETRREL (81 aa)). Residues glutamate 26, aspartate 69, and aspartate 71 each contribute to the Mg(2+) site.

The protein belongs to the UPF0292 family. It depends on Mg(2+) as a cofactor.

This chain is UPF0292 protein TGAM_1777, found in Thermococcus gammatolerans (strain DSM 15229 / JCM 11827 / EJ3).